The sequence spans 476 residues: Transposase for transposon Tn5 (476 aa).

Residues 1–70 are interaction with DNA; that stretch reads MITSALHRAA…YRFIRNPNVS (70 aa). Mg(2+)-binding residues include Asp-97 and Asp-188. 2 interaction with DNA regions span residues 237–255 and 319–348; these read YQISIPQKGVVDKRGKRKN and YTHRWRIEEFHKAWKTGAGAERQRMEEPDN. Glu-326 contacts Mg(2+). Positions 369–476 are important for dimerization; the sequence is SFTLPQALRA…KDLMAQGIKI (108 aa).

It belongs to the transposase 11 family. As to quaternary structure, monomer. Homodimer of tnp (isoform 1), and heterodimer of tnp (isoform 1) and inh (isoform 2). Mg(2+) serves as cofactor.

Functionally, mediates transposition of transposon Tn5 by a 'cut and paste' mechanism. First, the monomeric transposase binds the 19 bp inverted DNA repeats flanking the transposon. Then, dimerization of the DNA-bound transposase creates a synaptic DNA complex. After nicking of the first DNA strand, excision of the transposon proceeds through a series of intermediates. The transposase then mediates the insertion of the transposon at a new site by strand transfer. The activity of the wild-type transposase is very low, and is further inhibited by dimerization with the transposase inhibitor (inh). In Escherichia coli, this protein is Transposase for transposon Tn5 (tnpA).